The chain runs to 240 residues: uncharacterized protein (240 aa).

This is an uncharacterized protein from Thermotoga maritima (strain ATCC 43589 / DSM 3109 / JCM 10099 / NBRC 100826 / MSB8).